We begin with the raw amino-acid sequence, 355 residues long: Receptor-like serine/threonine-protein kinase At1g78530 (355 aa).

Residues 1 to 8 (MANAKETT) are Extracellular-facing. The helical transmembrane segment at 9 to 29 (FYITISVVAFVIGKIVIALLF) threads the bilayer. At 30–355 (YKRWKRKHTI…YIKLSTRSSF (326 aa)) the chain is on the cytoplasmic side. Positions 75 to 347 (LSNKDILGSG…TEVVKLLEYI (273 aa)) constitute a Protein kinase domain. ATP-binding positions include 81–89 (LGSGGFGTV) and K103. The residue at position 148 (Y148) is a Phosphotyrosine. The active-site Proton acceptor is the D197. A phosphoserine mark is found at S201 and S230. Phosphothreonine is present on residues T231 and T236. Y244 is subject to Phosphotyrosine.

Belongs to the protein kinase superfamily. Ser/Thr protein kinase family.

It localises to the cell membrane. It catalyses the reaction L-seryl-[protein] + ATP = O-phospho-L-seryl-[protein] + ADP + H(+). The catalysed reaction is L-threonyl-[protein] + ATP = O-phospho-L-threonyl-[protein] + ADP + H(+). This Arabidopsis thaliana (Mouse-ear cress) protein is Receptor-like serine/threonine-protein kinase At1g78530.